The primary structure comprises 126 residues: Ribosome-binding factor A (126 aa).

The protein belongs to the RbfA family. In terms of assembly, monomer. Binds 30S ribosomal subunits, but not 50S ribosomal subunits or 70S ribosomes.

It is found in the cytoplasm. One of several proteins that assist in the late maturation steps of the functional core of the 30S ribosomal subunit. Associates with free 30S ribosomal subunits (but not with 30S subunits that are part of 70S ribosomes or polysomes). Required for efficient processing of 16S rRNA. May interact with the 5'-terminal helix region of 16S rRNA. The protein is Ribosome-binding factor A of Azoarcus sp. (strain BH72).